Here is a 281-residue protein sequence, read N- to C-terminus: DegV domain-containing protein SCO2569 (281 aa).

Residues 5-280 enclose the DegV domain; that stretch reads VAIVTDSTAY…PGLLGVVVSS (276 aa). Residues Thr62 and Ser95 each coordinate hexadecanoate.

In terms of biological role, may bind long-chain fatty acids, such as palmitate, and may play a role in lipid transport or fatty acid metabolism. This chain is DegV domain-containing protein SCO2569, found in Streptomyces coelicolor (strain ATCC BAA-471 / A3(2) / M145).